Consider the following 355-residue polypeptide: uncharacterized protein (355 aa).

A disordered region spans residues 1-104 (MGTKGLPLYP…EQAKTVQGGR (104 aa)). Position 19 is an N6-acetyllysine (lysine 19). The span at 45 to 54 (EEGTDLEGDM) shows a compositional bias: acidic residues. Phosphoserine is present on serine 175. 2 disordered regions span residues 247-310 (PRGS…AAYK) and 325-355 (SITS…GKKP). At tyrosine 293 the chain carries Phosphotyrosine. A Phosphoserine modification is found at serine 294. Positions 325 to 334 (SITSLSSRTT) are enriched in polar residues. Residues 336 to 348 (LPAADPFALAPFP) show a composition bias toward low complexity.

This is an uncharacterized protein from Homo sapiens (Human).